Here is a 109-residue protein sequence, read N- to C-terminus: MAITDILSAKDIESALSSCQAADSFNYKSFFSTVGLSSKTPDQIKKVFGILDQDKSGFIEEEELQLFLKNFSSSARVLTSAETKAFLAAGDTDGDGKIGVEEFQSLVKA.

Position 2 is an N-acetylalanine (Ala-2). EF-hand domains are found at residues 39–74 (KTPD…FSSS) and 78–109 (LTSA…LVKA). Positions 52, 54, 56, 63, 91, 93, 95, 97, and 102 each coordinate Ca(2+).

This sequence belongs to the parvalbumin family.

Functionally, appears to promote immune maturation in bone marrow cells in culture. Binds two calcium ions. The sequence is that of Parvalbumin, thymic from Gallus gallus (Chicken).